A 902-amino-acid polypeptide reads, in one-letter code: Cytosolic carboxypeptidase 2 (902 aa).

Residues 396–666 enclose the Peptidase M14 domain; sequence YPYTYTDLQC…HVCDTLLDFC (271 aa). Zn(2+) is bound by residues H462, E465, and H558. E630 serves as the catalytic Proton donor/acceptor. Residues 746–758 are compositionally biased toward basic residues; the sequence is FKKKKKKSLQTRK. Disordered stretches follow at residues 746–770 and 796–879; these read FKKK…KNLM and FKNS…PRSR. Residues 853 to 866 show a composition bias toward polar residues; sequence VSCSPKRTINSSQE.

The protein belongs to the peptidase M14 family. As to quaternary structure, interacts with RARRES1, KIF11 AND MAPRE1. Zn(2+) is required as a cofactor.

The protein resides in the cytoplasm. It is found in the cytosol. It localises to the cytoskeleton. The protein localises to the microtubule organizing center. Its subcellular location is the centrosome. The protein resides in the centriole. It is found in the cilium basal body. The enzyme catalyses (L-glutamyl)(n+1)-gamma-L-glutamyl-L-glutamyl-[protein] + H2O = (L-glutamyl)(n)-gamma-L-glutamyl-L-glutamyl-[protein] + L-glutamate. Inhibited by RARRES1. Functionally, metallocarboxypeptidase that mediates deglutamylation of tubulin and non-tubulin target proteins. Catalyzes the removal of polyglutamate side chains present on the gamma-carboxyl group of glutamate residues within the C-terminal tail of tubulin protein. Specifically cleaves tubulin long-side-chains, while it is not able to remove the branching point glutamate. Also catalyzes the removal of polyglutamate residues from the carboxy-terminus of non-tubulin proteins such as MYLK. This is Cytosolic carboxypeptidase 2 from Homo sapiens (Human).